A 195-amino-acid chain; its full sequence is ADP-ribosylation factor L (195 aa).

G2 carries N-myristoyl glycine lipidation. GTP-binding positions include 25–32, 72–76, and 131–134; these read GLENSGKT, DLLYP, and NKQD.

This sequence belongs to the small GTPase superfamily. Arf family.

Functionally, may be involved in trafficking events within the endosomal system. The chain is ADP-ribosylation factor L (arrL) from Dictyostelium discoideum (Social amoeba).